Reading from the N-terminus, the 141-residue chain is HTH-type transcriptional repressor NsrR (141 aa).

An HTH rrf2-type domain is found at 2-129 (QLTSFTDYGL…DQYTLADMVK (128 aa)). The segment at residues 28–51 (ISEVTEVYGVSRNHMVKIINQLSR) is a DNA-binding region (H-T-H motif). 3 residues coordinate [2Fe-2S] cluster: Cys-91, Cys-96, and Cys-102.

[2Fe-2S] cluster is required as a cofactor.

Nitric oxide-sensitive repressor of genes involved in protecting the cell against nitrosative stress. May require iron for activity. The chain is HTH-type transcriptional repressor NsrR from Pectobacterium atrosepticum (strain SCRI 1043 / ATCC BAA-672) (Erwinia carotovora subsp. atroseptica).